The chain runs to 595 residues: Aspartate--tRNA ligase (595 aa).

E173 contributes to the L-aspartate binding site. The segment at 197 to 200 (QLFK) is aspartate. Position 219 (R219) interacts with L-aspartate. ATP-binding positions include 219–221 (RDE) and Q228. L-aspartate is bound at residue H449. E483 contributes to the ATP binding site. R490 serves as a coordination point for L-aspartate. ATP is bound at residue 535 to 538 (GLDR).

Belongs to the class-II aminoacyl-tRNA synthetase family. Type 1 subfamily. As to quaternary structure, homodimer.

Its subcellular location is the cytoplasm. The enzyme catalyses tRNA(Asp) + L-aspartate + ATP = L-aspartyl-tRNA(Asp) + AMP + diphosphate. In terms of biological role, catalyzes the attachment of L-aspartate to tRNA(Asp) in a two-step reaction: L-aspartate is first activated by ATP to form Asp-AMP and then transferred to the acceptor end of tRNA(Asp). This Shewanella woodyi (strain ATCC 51908 / MS32) protein is Aspartate--tRNA ligase.